The following is a 466-amino-acid chain: Rhodanese-like domain-containing protein 4, chloroplastic (466 aa).

The transit peptide at methionine 1–leucine 15 directs the protein to the chloroplast. Positions methionine 1–lysine 35 are disordered. A thylakoid-targeting transit peptide spans serine 16–serine 69. The helical transmembrane segment at proline 103–leucine 123 threads the bilayer. In terms of domain architecture, Rhodanese spans threonine 144–glutamate 250. A helical transmembrane segment spans residues valine 277–isoleucine 297. The span at glutamate 373 to valine 384 shows a compositional bias: low complexity. 2 disordered regions span residues glutamate 373–glutamate 392 and alanine 426–proline 466. Positions leucine 455–proline 466 are enriched in pro residues.

In terms of assembly, component of high molecular weight thylakoid LFNRs-containing protein complexes containing LIR1, LFNR1, LFNR2, TIC62 and TROL proteins. Expressed in leaves and stems, and at lower levels in flowers and siliques (at protein level).

It is found in the plastid. The protein resides in the chloroplast envelope. The protein localises to the chloroplast thylakoid membrane. Rhodanese domain-containing protein required for anchoring ferredoxin--NADP reductase to the thylakoid membranes and sustaining efficient linear electron flow (LEF). The polypeptide is Rhodanese-like domain-containing protein 4, chloroplastic (Arabidopsis thaliana (Mouse-ear cress)).